The primary structure comprises 1009 residues: Dihydropyrimidine dehydrogenase [NADP(+)] (1009 aa).

Residues 69–99 (RGALFESARCLKCADAPCQKGCPTQLDIKSF) form the 4Fe-4S ferredoxin-type 1 domain. Cysteine 78, cysteine 81, cysteine 86, and cysteine 90 together coordinate [4Fe-4S] cluster. Valine 128 contacts FAD. Cysteine 129, cysteine 135, cysteine 139, and glutamine 155 together coordinate [4Fe-4S] cluster. FAD-binding positions include 193 to 197 (GCGPT), 217 to 225 (EKEQYLGGL), arginine 234, and leucine 260. Residues 339 to 342 (AGDT), 363 to 364 (RR), arginine 370, 436 to 438 (AFG), and 479 to 484 (DLVGNG) each bind NADP(+). FAD is bound at residue 478-486 (GDLVGNGTT). FMN contacts are provided by residues serine 548 and 572–573 (KT). Substrate contacts are provided by residues asparagine 607 and 666–668 (NLS). The active-site Proton acceptor is the cysteine 669. Residue lysine 707 participates in FMN binding. 734-735 (NT) serves as a coordination point for substrate. FMN contacts are provided by residues glycine 765, 791 to 793 (TGG), and 814 to 815 (CS). 2 consecutive 4Fe-4S ferredoxin-type domains span residues 932 to 964 (VVAL…FDGK) and 965 to 995 (THIP…MVPR). Cysteine 941, cysteine 944, cysteine 947, cysteine 951, cysteine 974, cysteine 977, cysteine 980, and cysteine 984 together coordinate [4Fe-4S] cluster.

This sequence belongs to the dihydropyrimidine dehydrogenase family. As to quaternary structure, homodimer. [4Fe-4S] cluster is required as a cofactor. The cofactor is FAD. Requires FMN as cofactor.

Its subcellular location is the cytoplasm. It catalyses the reaction 5,6-dihydrouracil + NADP(+) = uracil + NADPH + H(+). It functions in the pathway amino-acid biosynthesis; beta-alanine biosynthesis. Involved in pyrimidine base degradation. Catalyzes the reduction of uracil and thymine. The sequence is that of Dihydropyrimidine dehydrogenase [NADP(+)] (pyd1) from Dictyostelium discoideum (Social amoeba).